Here is a 532-residue protein sequence, read N- to C-terminus: NMDA receptor synaptonuclear signaling and neuronal migration factor (532 aa).

Gly2 is lipidated: N-myristoyl glycine. Residues 2–235 (GAAASRRRAL…FSFQTATTTM (234 aa)) form a necessary and sufficient to elicit dendritic processes and synaptic contacts region. 2 disordered regions span residues 34-67 (SQSHPENRNGADHLLADAYSGHDGSPEMQPAPQN) and 127-174 (RRQR…GCAQ). Positions 38–48 (PENRNGADHLL) are enriched in basic and acidic residues. Residues 127 to 139 (RRQRERHPHHHSQ) are compositionally biased toward basic residues. Polar residues predominate over residues 155-164 (PCQSWAGSRQ). Phosphoserine is present on Ser206. The short motif at 249 to 252 (RRKR) is the Nuclear localization signal element. Residues 275–315 (RVKAQTFAERRERSFSRSWSDPTPMKADTSHDSRDSSDLQS) are disordered. Ser292 and Ser294 each carry phosphoserine. The span at 302–311 (DTSHDSRDSS) shows a compositional bias: basic and acidic residues.

It belongs to the NSMF family. Interacts with KPNA1; the interaction occurs in a calcium-independent manner after synaptic NMDA receptor stimulation and is required for nuclear import of NSMF but is competed by CABP1. Interacts (via the central NLS-containing motif region) with CABP1 (via EF-hands 1 and 2); the interaction occurs in a calcium-dependent manner after synaptic NMDA receptor stimulation and prevents the nuclear import of NSMF. Cannot be competed by calmodulin. Proteolytically processed after NMDA receptor activation. Cleaved in a calcium-dependent and calpain-sensitive manner. Calpain cleavage is essential for the translocation process from dendrites to the nucleus. As to expression, preferentially expressed in immature migratory, in comparison to postmigrating, gonadotropin-releasing hormone (GnRH) neuronal cell lines (at protein level). Expressed in adult brain and liver. In the brain, expressed in the primary pituitary gland, cortex, hippocampus, olfactory bulb and thalamus.

The protein localises to the nucleus. It is found in the nucleus envelope. It localises to the nucleus membrane. Its subcellular location is the nucleus matrix. The protein resides in the cytoplasm. The protein localises to the cell cortex. It is found in the cytoskeleton. It localises to the cell membrane. Its subcellular location is the cell projection. The protein resides in the dendrite. The protein localises to the synapse. It is found in the synaptosome. It localises to the postsynaptic density. Its subcellular location is the membrane. Couples NMDA-sensitive glutamate receptor signaling to the nucleus and triggers long-lasting changes in the cytoarchitecture of dendrites and spine synapse processes. Part of the cAMP response element-binding protein (CREB) shut-off signaling pathway. Stimulates outgrowth of olfactory axons and migration of gonadotropin-releasing hormone (GnRH) and luteinizing-hormone-releasing hormone (LHRH) neuronal cells. This is NMDA receptor synaptonuclear signaling and neuronal migration factor (Nsmf) from Mus musculus (Mouse).